Consider the following 321-residue polypeptide: uncharacterized protein (321 aa).

The disordered stretch occupies residues 1–80; the sequence is MQGGQEVGRE…GELSGGWGEF (80 aa).

This is an uncharacterized protein from Mus musculus (Mouse).